The following is a 242-amino-acid chain: Peroxisomal membrane protein 11-3 (242 aa).

Residues 1-22 form a disordered region; it reads MAAAAAAAGSSDSRKPAAHPPP. The Cytoplasmic portion of the chain corresponds to 1 to 102; sequence MAAAAAAAGS…LRAHPHPPPA (102 aa). A helical membrane pass occupies residues 103 to 123; it reads VALLAYGGEGVYYFLEQFVWL. Residues 124-214 lie on the Lumenal side of the membrane; that stretch reads AKAGLLPAHL…MALGDVTDGK (91 aa). The helical transmembrane segment at 215-235 threads the bilayer; it reads GLLGSSTLMASAGLLSALISA. At 236–242 the chain is on the cytoplasmic side; that stretch reads HKNWNSC.

It belongs to the peroxin-11 family. Expressed in seedlings, roots, leaf sheaths, spikelets and endosperm.

The protein resides in the peroxisome membrane. Functionally, involved in peroxisomal proliferation. This chain is Peroxisomal membrane protein 11-3 (PEX11-3), found in Oryza sativa subsp. japonica (Rice).